The primary structure comprises 99 residues: Aspartyl/glutamyl-tRNA(Asn/Gln) amidotransferase subunit C (99 aa).

This sequence belongs to the GatC family. In terms of assembly, heterotrimer of A, B and C subunits.

It catalyses the reaction L-glutamyl-tRNA(Gln) + L-glutamine + ATP + H2O = L-glutaminyl-tRNA(Gln) + L-glutamate + ADP + phosphate + H(+). It carries out the reaction L-aspartyl-tRNA(Asn) + L-glutamine + ATP + H2O = L-asparaginyl-tRNA(Asn) + L-glutamate + ADP + phosphate + 2 H(+). In terms of biological role, allows the formation of correctly charged Asn-tRNA(Asn) or Gln-tRNA(Gln) through the transamidation of misacylated Asp-tRNA(Asn) or Glu-tRNA(Gln) in organisms which lack either or both of asparaginyl-tRNA or glutaminyl-tRNA synthetases. The reaction takes place in the presence of glutamine and ATP through an activated phospho-Asp-tRNA(Asn) or phospho-Glu-tRNA(Gln). The chain is Aspartyl/glutamyl-tRNA(Asn/Gln) amidotransferase subunit C from Cupriavidus necator (strain ATCC 17699 / DSM 428 / KCTC 22496 / NCIMB 10442 / H16 / Stanier 337) (Ralstonia eutropha).